Reading from the N-terminus, the 772-residue chain is Ion-translocating oxidoreductase complex subunit C (772 aa).

4Fe-4S ferredoxin-type domains are found at residues 369–397 (GEPQEEQSCIRCSACADACPADLLPQQLY) and 407–436 (KATTHNIADCIECGACAWVCPSNIPLVQYF). Residues C377, C380, C383, C387, C416, C419, C422, and C426 each coordinate [4Fe-4S] cluster. Disordered stretches follow at residues 602-684 (KLEQ…DPRK), 696-717 (ARKLEQQQANAEPEEQVDPRKA), and 727-746 (KARKLEQQQANAEPEEQVDP). Over residues 605-615 (QQQANAEPEQQ) the composition is skewed to low complexity.

This sequence belongs to the 4Fe4S bacterial-type ferredoxin family. RnfC subfamily. As to quaternary structure, the complex is composed of six subunits: RsxA, RsxB, RsxC, RsxD, RsxE and RsxG. [4Fe-4S] cluster serves as cofactor.

Its subcellular location is the cell inner membrane. Its function is as follows. Part of a membrane-bound complex that couples electron transfer with translocation of ions across the membrane. Required to maintain the reduced state of SoxR. This is Ion-translocating oxidoreductase complex subunit C from Escherichia coli O157:H7 (strain EC4115 / EHEC).